Reading from the N-terminus, the 184-residue chain is MKSVLLLTTLLVPAHLVAAWSNNYAVDCPQHCDSSECKSSPRCKRTVLDDCGCCRVCAAGRGETCYRTVSGMDGMKCGPGLRCQPSNGEDPFGEEFGICKDCPYGTFGMDCRETCNCQSGICDRGTGKCLKFPFFQYSVTKSSNRFVSLTEHDMASGDGNIVREEVVKENAAGSPVMRKWLNPR.

Residues 1–19 (MKSVLLLTTLLVPAHLVAA) form the signal peptide. Residues 24-102 (YAVDCPQHCD…GEEFGICKDC (79 aa)) enclose the IGFBP N-terminal domain. Cystine bridges form between cysteine 28–cysteine 51, cysteine 32–cysteine 53, cysteine 37–cysteine 54, cysteine 43–cysteine 57, cysteine 65–cysteine 83, and cysteine 77–cysteine 99. O-linked (Xyl...) (chondroitin sulfate) serine glycosylation is present at serine 156.

As to quaternary structure, monomer. In terms of processing, may contain intrachain disulfide bonds. O-glycosylated; contains chondroitin sulfate and dermatan sulfate. Expressed in lung, on the vascular capillary network within alveolar walls, and also at lower level in kidney.

Its subcellular location is the secreted. In terms of biological role, involved in angiogenesis; promotes angiogenic sprouting. May have potent implications in lung endothelial cell-leukocyte interactions. In Homo sapiens (Human), this protein is Endothelial cell-specific molecule 1 (ESM1).